A 412-amino-acid chain; its full sequence is Serine hydroxymethyltransferase (412 aa).

(6S)-5,6,7,8-tetrahydrofolate-binding positions include Leu117 and 121 to 123; that span reads GHL. Lys226 is subject to N6-(pyridoxal phosphate)lysine.

The protein belongs to the SHMT family. As to quaternary structure, homodimer. Pyridoxal 5'-phosphate is required as a cofactor.

It is found in the cytoplasm. The enzyme catalyses (6R)-5,10-methylene-5,6,7,8-tetrahydrofolate + glycine + H2O = (6S)-5,6,7,8-tetrahydrofolate + L-serine. It participates in one-carbon metabolism; tetrahydrofolate interconversion. Its pathway is amino-acid biosynthesis; glycine biosynthesis; glycine from L-serine: step 1/1. Its function is as follows. Catalyzes the reversible interconversion of serine and glycine with tetrahydrofolate (THF) serving as the one-carbon carrier. This reaction serves as the major source of one-carbon groups required for the biosynthesis of purines, thymidylate, methionine, and other important biomolecules. Also exhibits THF-independent aldolase activity toward beta-hydroxyamino acids, producing glycine and aldehydes, via a retro-aldol mechanism. This Symbiobacterium thermophilum (strain DSM 24528 / JCM 14929 / IAM 14863 / T) protein is Serine hydroxymethyltransferase.